Here is a 416-residue protein sequence, read N- to C-terminus: Homeobox even-skipped homolog protein 1 (416 aa).

Disordered stretches follow at residues 30–120 and 138–178; these read AVSS…SDFY and YQHS…LACS. The span at 72-82 shows a compositional bias: low complexity; it reads GLAGSAAGLGA. The segment covering 102–114 has biased composition (polar residues); that stretch reads DSLSGQGQPSSSD. Positions 183-242 form a DNA-binding region, homeobox; sequence MRRYRTAFTREQIARLEKEFYRENYVSRPRRCELAAALNLPETTIKVWFQNRRMKDKRQR.

It belongs to the even-skipped homeobox family.

The protein localises to the nucleus. Functionally, may play a role in the specification of neuronal cell types. May play a role in the dorsoventral specification of mesodermal cell fate. This is Homeobox even-skipped homolog protein 1 (Evx1) from Mus musculus (Mouse).